The chain runs to 67 residues: Large ribosomal subunit protein uL29 (67 aa).

The protein belongs to the universal ribosomal protein uL29 family.

This is Large ribosomal subunit protein uL29 (rpmC) from Thermus thermophilus.